Reading from the N-terminus, the 219-residue chain is Thiamine-phosphate synthase (219 aa).

Residues 44–48 and N79 contribute to the 4-amino-2-methyl-5-(diphosphooxymethyl)pyrimidine site; that span reads QFREK. Residues D80 and D99 each contribute to the Mg(2+) site. S117 contributes to the 4-amino-2-methyl-5-(diphosphooxymethyl)pyrimidine binding site. Position 143–145 (143–145) interacts with 2-[(2R,5Z)-2-carboxy-4-methylthiazol-5(2H)-ylidene]ethyl phosphate; sequence TST. Residue K146 coordinates 4-amino-2-methyl-5-(diphosphooxymethyl)pyrimidine. 2-[(2R,5Z)-2-carboxy-4-methylthiazol-5(2H)-ylidene]ethyl phosphate is bound by residues G175 and 195 to 196; that span reads IS.

This sequence belongs to the thiamine-phosphate synthase family. It depends on Mg(2+) as a cofactor.

The catalysed reaction is 2-[(2R,5Z)-2-carboxy-4-methylthiazol-5(2H)-ylidene]ethyl phosphate + 4-amino-2-methyl-5-(diphosphooxymethyl)pyrimidine + 2 H(+) = thiamine phosphate + CO2 + diphosphate. It carries out the reaction 2-(2-carboxy-4-methylthiazol-5-yl)ethyl phosphate + 4-amino-2-methyl-5-(diphosphooxymethyl)pyrimidine + 2 H(+) = thiamine phosphate + CO2 + diphosphate. It catalyses the reaction 4-methyl-5-(2-phosphooxyethyl)-thiazole + 4-amino-2-methyl-5-(diphosphooxymethyl)pyrimidine + H(+) = thiamine phosphate + diphosphate. It functions in the pathway cofactor biosynthesis; thiamine diphosphate biosynthesis; thiamine phosphate from 4-amino-2-methyl-5-diphosphomethylpyrimidine and 4-methyl-5-(2-phosphoethyl)-thiazole: step 1/1. Functionally, condenses 4-methyl-5-(beta-hydroxyethyl)thiazole monophosphate (THZ-P) and 2-methyl-4-amino-5-hydroxymethyl pyrimidine pyrophosphate (HMP-PP) to form thiamine monophosphate (TMP). This is Thiamine-phosphate synthase from Bacillus cereus (strain AH187).